Consider the following 191-residue polypeptide: NAD(P)H-quinone oxidoreductase subunit L, chloroplastic (191 aa).

A chloroplast-targeting transit peptide spans 1 to 46; it reads MSRCGSLGLYAPNALPSLSLKPRSVKSPFCITSHTKPNDTLLHNVN. 3 helical membrane passes run 61 to 81, 93 to 113, and 129 to 149; these read TILAAQLGAVLATIDHPALAI, VVLDIGIISVWYFLVMPPIIM, and YLQFMFVFMFFPGLLLWAPFL.

Belongs to the NDH complex subunit L family. As to quaternary structure, part of the chloroplast NDH complex, composed of a mixture of chloroplast and nucleus encoded subunits. Component of the NDH subcomplex A, at least composed of ndhH, ndhI, ndhJ, ndhK, ndhL, ndhM, ndhN and ndhO.

It localises to the plastid. The protein localises to the chloroplast thylakoid membrane. The catalysed reaction is a plastoquinone + NADH + (n+1) H(+)(in) = a plastoquinol + NAD(+) + n H(+)(out). The enzyme catalyses a plastoquinone + NADPH + (n+1) H(+)(in) = a plastoquinol + NADP(+) + n H(+)(out). NDH shuttles electrons from NAD(P)H:plastoquinone, via FMN and iron-sulfur (Fe-S) centers, to quinones in the photosynthetic chain and possibly in a chloroplast respiratory chain. The immediate electron acceptor for the enzyme in this species is believed to be plastoquinone. Couples the redox reaction to proton translocation, and thus conserves the redox energy in a proton gradient. This is NAD(P)H-quinone oxidoreductase subunit L, chloroplastic from Arabidopsis thaliana (Mouse-ear cress).